Reading from the N-terminus, the 557-residue chain is Glucose-6-phosphate isomerase (557 aa).

Glu-359 serves as the catalytic Proton donor. Catalysis depends on residues His-390 and Lys-518.

The protein belongs to the GPI family.

The protein localises to the cytoplasm. The catalysed reaction is alpha-D-glucose 6-phosphate = beta-D-fructose 6-phosphate. It participates in carbohydrate biosynthesis; gluconeogenesis. It functions in the pathway carbohydrate degradation; glycolysis; D-glyceraldehyde 3-phosphate and glycerone phosphate from D-glucose: step 2/4. Its function is as follows. Catalyzes the reversible isomerization of glucose-6-phosphate to fructose-6-phosphate. The chain is Glucose-6-phosphate isomerase from Hahella chejuensis (strain KCTC 2396).